Reading from the N-terminus, the 361-residue chain is Phospho-N-acetylmuramoyl-pentapeptide-transferase (361 aa).

10 consecutive transmembrane segments (helical) span residues 25–45, 72–92, 95–115, 135–155, 169–189, 200–220, 240–260, 264–284, 289–309, and 338–358; these read TGGA…WIID, TPTM…VLWA, LNPY…VGFY, LLIE…LGRA, VMLN…VGAG, GLAI…SYLA, LAVL…FNAP, IFMG…IAVA, IVLA…IVQV, and QIVI…LSTL.

Belongs to the glycosyltransferase 4 family. MraY subfamily. It depends on Mg(2+) as a cofactor.

The protein localises to the cell inner membrane. The catalysed reaction is UDP-N-acetyl-alpha-D-muramoyl-L-alanyl-gamma-D-glutamyl-meso-2,6-diaminopimeloyl-D-alanyl-D-alanine + di-trans,octa-cis-undecaprenyl phosphate = di-trans,octa-cis-undecaprenyl diphospho-N-acetyl-alpha-D-muramoyl-L-alanyl-D-glutamyl-meso-2,6-diaminopimeloyl-D-alanyl-D-alanine + UMP. It functions in the pathway cell wall biogenesis; peptidoglycan biosynthesis. In terms of biological role, catalyzes the initial step of the lipid cycle reactions in the biosynthesis of the cell wall peptidoglycan: transfers peptidoglycan precursor phospho-MurNAc-pentapeptide from UDP-MurNAc-pentapeptide onto the lipid carrier undecaprenyl phosphate, yielding undecaprenyl-pyrophosphoryl-MurNAc-pentapeptide, known as lipid I. This Rhodopseudomonas palustris (strain TIE-1) protein is Phospho-N-acetylmuramoyl-pentapeptide-transferase.